The primary structure comprises 1258 residues: MASACGAPGPGGALGSQAPSWYHRDLSRAAAEELLARAGRDGSFLVRDSESVAGAFALCVLYQKHVHTYRILPDGEDFLAVQTSQGVPVRRFQTLGELIGLYAQPNQGLVCALLLPVEGEREPDPPDDRDASDGEDEKPPLPPRSGSTSISAPTGPSSPLPAPETPTAPAAESAPNGLSTVSHDYLKGSYGLDLEAVRGGASHLPHLTRTLATSCRRLHSEVDKVLSGLEILSKVFDQQSSPMVTRLLQQQNLPQTGEQELESLVLKLSVLKDFLSGIQKKALKALQDMSSTAPPAPQPSTRKAKTIPVQAFEVKLDVTLGDLTKIGKSQKFTLSVDVEGGRLVLLRRQRDSQEDWTTFTHDRIRQLIKSQRVQNKLGVVFEKEKDRTQRKDFIFVSARKREAFCQLLQLMKNKHSKQDEPDMISVFIGTWNMGSVPPPKNVTSWFTSKGLGKTLDEVTVTIPHDIYVFGTQENSVGDREWLDLLRGGLKELTDLDYRPIAMQSLWNIKVAVLVKPEHENRISHVSTSSVKTGIANTLGNKGAVGVSFMFNGTSFGFVNCHLTSGNEKTARRNQNYLDILRLLSLGDRQLNAFDISLRFTHLFWFGDLNYRLDMDIQEILNYISRKEFEPLLRVDQLNLEREKHKVFLRFSEEEISFPPTYRYERGSRDTYAWHKQKPTGVRTNVPSWCDRILWKSYPETHIICNSYGCTDDIVTSDHSPVFGTFEVGVTSQFISKKGLSKTSDQAYIEFESIEAIVKTASRTKFFIEFYSTCLEEYKKSFENDAQSSDNINFLKVQWSSRQLPTLKPILADIEYLQDQHLLLTVKSMDGYESYGECVVALKSMIGSTAQQFLTFLSHRGEETGNIRGSMKVRVPTERLGTRERLYEWISIDKDEAGAKSKAPSVSRGSQEPRSGSRKPAFTEASCPLSRLFEEPEKPPPTGRPPAPPRAAPREEPLTPRLKPEGAPEPEGVAAPPPKNSFNNPAYYVLEGVPHQLLPPEPPSPARAPVPSATKNKVAITVPAPQLGHHRHPRVGEGSSSDEESGGTLPPPDFPPPPLPDSAIFLPPSLDPLPGPVVRGRGGAEARGPPPPKAHPRPPLPPGPSPASTFLGEVASGDDRSCSVLQMAKTLSEVDYAPAGPARSALLPGPLELQPPRGLPSDYGRPLSFPPPRIRESIQEDLAEEAPCLQGGRASGLGEAGMSAWLRAIGLERYEEGLVHNGWDDLEFLSDITEEDLEEAGVQDPAHKRLLLDTLQLSK.

In terms of domain architecture, SH2 spans Trp21–Val117. The span at Gly119–Ser132 shows a compositional bias: basic and acidic residues. Residues Gly119–Thr180 form a disordered region. At Ser132 the chain carries Phosphoserine. The segment covering Ser145 to Gly155 has biased composition (polar residues). Pro residues predominate over residues Pro156 to Pro166. Residue Thr165 is modified to Phosphothreonine. 2 positions are modified to phosphoserine: Ser241 and Ser352. Tyr886 is subject to Phosphotyrosine. Phosphoserine is present on Ser890. The tract at residues Gly897–Asp1118 is disordered. A compositionally biased stretch (pro residues) spans Pro938–Ala950. The SH3-binding signature appears at Pro944–Arg949. Residues Ala951–Gly965 are compositionally biased toward basic and acidic residues. Thr958 is modified (phosphothreonine). The NPXY motif motif lies at Asn983–Tyr986. Tyr986 bears the Phosphotyrosine; by SRC mark. Composition is skewed to pro residues over residues Leu996–Ala1007, Leu1048–Pro1059, and Gly1087–Ser1104. Ser1131 carries the post-translational modification Phosphoserine. Tyr1135 and Tyr1162 each carry phosphotyrosine. Residues Leu1196–Lys1258 form the SAM domain. Ser1257 is modified (phosphoserine).

It belongs to the inositol 1,4,5-trisphosphate 5-phosphatase family. In terms of assembly, interacts with tyrosine phosphorylated form of SHC1. Interacts with EGFR. Upon stimulation by the EGF signaling pathway, it forms a complex with SHC1 and EGFR. Interacts with cytoskeletal protein SORBS3/vinexin, promoting its localization to the periphery of cells. Forms a complex with filamin (FLNA or FLNB), actin, GPIb (GP1BA or GP1BB) that regulates cortical and submembraneous actin. Interacts with c-Met/MET, when c-Met/MET is phosphorylated on 'Tyr-1356'. Interacts with p130Cas/BCAR1. Interacts with CENTD3/ARAP3 via its SAM domain. Interacts with c-Cbl/CBL and CAP/SORBS1. Interacts with activated EPHA2 receptor. Interacts with receptor FCGR2A. Interacts with receptor FCGR2B. Interacts with tyrosine kinase ABL1. Interacts with tyrosine kinase TEC. Interacts with CSF1R. Interacts (via N-terminus) with SH3YL1 (via SH3 domain). Interacts with FCRL6 (tyrosine phosphorylated form). Interacts (via SH2 domain) with tyrosine phosphorylated KLRC1 (via ITIM). Interacts with NEDD9/HEF1. In terms of processing, tyrosine phosphorylated by the members of the SRC family after exposure to a diverse array of extracellular stimuli such as insulin, growth factors such as EGF or PDGF, chemokines, integrin ligands and hypertonic and oxidative stress. May be phosphorylated upon IgG receptor FCGR2B-binding. Phosphorylated at Tyr-986 following cell attachment and spreading. Phosphorylated at Tyr-1162 following EGF signaling pathway stimulation. Phosphorylated at Thr-958 in response to PDGF. Widely expressed, most prominently in skeletal muscle, heart and brain. Present in platelets. Expressed in transformed myeloid cells and in primary macrophages, but not in peripheral blood monocytes.

The protein resides in the cytoplasm. The protein localises to the cytosol. It localises to the cytoskeleton. Its subcellular location is the membrane. It is found in the cell projection. The protein resides in the filopodium. The protein localises to the lamellipodium. It localises to the basal cell membrane. Its subcellular location is the nucleus. It is found in the nucleus speckle. The protein resides in the spindle pole. It catalyses the reaction a 1,2-diacyl-sn-glycero-3-phospho-(1D-myo-inositol-3,4,5-trisphosphate) + H2O = a 1,2-diacyl-sn-glycero-3-phospho-(1D-myo-inositol-3,4-bisphosphate) + phosphate. The catalysed reaction is 1,2-dioctanoyl-sn-glycero-3-phospho-(1D-myo-inositol-3,4,5-trisphosphate) + H2O = 1,2-dioctanoyl-sn-glycero-3-phospho-(1D-myo-inositol-3,4-bisphosphate) + phosphate. It carries out the reaction 1,2-dihexadecanoyl-sn-glycero-3-phospho-(1D-myo-inositol-3,4,5-trisphosphate) + H2O = 1,2-dihexadecanoyl-sn-glycero-3-phospho-(1D-myo-inositol-3,4-bisphosphate) + phosphate. Activated upon translocation to the sites of synthesis of PtdIns(3,4,5)P3 in the membrane. Enzymatic activity is enhanced in the presence of phosphatidylserine. Its function is as follows. Phosphatidylinositol (PtdIns) phosphatase that specifically hydrolyzes the 5-phosphate of phosphatidylinositol-3,4,5-trisphosphate (PtdIns(3,4,5)P3) to produce PtdIns(3,4)P2, thereby negatively regulating the PI3K (phosphoinositide 3-kinase) pathways. Required for correct mitotic spindle orientation and therefore progression of mitosis. Plays a central role in regulation of PI3K-dependent insulin signaling, although the precise molecular mechanisms and signaling pathways remain unclear. While overexpression reduces both insulin-stimulated MAP kinase and Akt activation, its absence does not affect insulin signaling or GLUT4 trafficking. Confers resistance to dietary obesity. May act by regulating AKT2, but not AKT1, phosphorylation at the plasma membrane. Part of a signaling pathway that regulates actin cytoskeleton remodeling. Required for the maintenance and dynamic remodeling of actin structures as well as in endocytosis, having a major impact on ligand-induced EGFR internalization and degradation. Participates in regulation of cortical and submembraneous actin by hydrolyzing PtdIns(3,4,5)P3 thereby regulating membrane ruffling. Regulates cell adhesion and cell spreading. Required for HGF-mediated lamellipodium formation, cell scattering and spreading. Acts as a negative regulator of EPHA2 receptor endocytosis by inhibiting via PI3K-dependent Rac1 activation. Acts as a regulator of neuritogenesis by regulating PtdIns(3,4,5)P3 level and is required to form an initial protrusive pattern, and later, maintain proper neurite outgrowth. Acts as a negative regulator of the FC-gamma-RIIA receptor (FCGR2A). Mediates signaling from the FC-gamma-RIIB receptor (FCGR2B), playing a central role in terminating signal transduction from activating immune/hematopoietic cell receptor systems. Involved in EGF signaling pathway. Upon stimulation by EGF, it is recruited by EGFR and dephosphorylates PtdIns(3,4,5)P3. Plays a negative role in regulating the PI3K-PKB pathway, possibly by inhibiting PKB activity. Down-regulates Fc-gamma-R-mediated phagocytosis in macrophages independently of INPP5D/SHIP1. In macrophages, down-regulates NF-kappa-B-dependent gene transcription by regulating macrophage colony-stimulating factor (M-CSF)-induced signaling. Plays a role in the localization of AURKA and NEDD9/HEF1 to the basolateral membrane at interphase in polarized cysts, thereby mediates cell cycle homeostasis, cell polarization and cilia assembly. Additionally promotion of cilia growth is also facilitated by hydrolysis of (PtdIns(3,4,5)P3) to PtdIns(3,4)P2. Promotes formation of apical membrane-initiation sites during the initial stages of lumen formation via Rho family-induced actin filament organization and CTNNB1 localization to cell-cell contacts. May also hydrolyze PtdIns(1,3,4,5)P4, and could thus affect the levels of the higher inositol polyphosphates like InsP6. Involved in endochondral ossification. This Homo sapiens (Human) protein is Phosphatidylinositol 3,4,5-trisphosphate 5-phosphatase 2.